The sequence spans 666 residues: Endogenous retrovirus group K member 10 Gag polyprotein (666 aa).

Gly-2 carries the N-myristoyl glycine lipid modification. Residues 164–183 (EGKGPELMGPSESKPRGTSP) are disordered. CCHC-type zinc fingers lie at residues 544–561 (GKCY…NCPV) and 580–597 (DLCP…QCRS). A disordered region spans residues 598–642 (KFDKNGQPLSGNEQRGQPQAPQQTGAFPIQPFVPQGFQGQQPPLS). The span at 604-622 (QPLSGNEQRGQPQAPQQTG) shows a compositional bias: polar residues. A compositionally biased stretch (low complexity) spans 624-640 (FPIQPFVPQGFQGQQPP).

It belongs to the beta type-B retroviral Gag protein family. HERV class-II K(HML-2) gag subfamily. Post-translationally, myristoylation is essential for retroviral assembly. Alteration of the glycine residue leads to a block in the budding of particles and an accumulation of Gag inside the cell. Specific enzymatic cleavages may yield mature proteins.

It is found in the cell membrane. The products of the Gag polyproteins of infectious retroviruses perform highly complex orchestrated tasks during the assembly, budding, maturation, and infection stages of the viral replication cycle. During viral assembly, the proteins form membrane associations and self-associations that ultimately result in budding of an immature virion from the infected cell. Gag precursors also function during viral assembly to selectively bind and package two plus strands of genomic RNA. Endogenous Gag proteins may have kept, lost or modified their original function during evolution. In Homo sapiens (Human), this protein is Endogenous retrovirus group K member 10 Gag polyprotein (ERVK-10).